The chain runs to 875 residues: Valine--tRNA ligase (875 aa).

The 'HIGH' region signature appears at 43–53; it reads PNVTGVLHMGH. The 'KMSKS' region motif lies at 534-538; sequence KMSKS. K537 serves as a coordination point for ATP. A coiled-coil region spans residues 805-875; the sequence is GNLINTEEEL…LKESIAALKK (71 aa).

It belongs to the class-I aminoacyl-tRNA synthetase family. ValS type 1 subfamily. In terms of assembly, monomer.

Its subcellular location is the cytoplasm. The enzyme catalyses tRNA(Val) + L-valine + ATP = L-valyl-tRNA(Val) + AMP + diphosphate. Functionally, catalyzes the attachment of valine to tRNA(Val). As ValRS can inadvertently accommodate and process structurally similar amino acids such as threonine, to avoid such errors, it has a 'posttransfer' editing activity that hydrolyzes mischarged Thr-tRNA(Val) in a tRNA-dependent manner. The protein is Valine--tRNA ligase of Phocaeicola vulgatus (strain ATCC 8482 / DSM 1447 / JCM 5826 / CCUG 4940 / NBRC 14291 / NCTC 11154) (Bacteroides vulgatus).